The sequence spans 823 residues: Adhesion G protein-coupled receptor E2 (823 aa).

A signal peptide spans 1–23 (MGGRVFLVFLAFCVWLTLPGAET). Over 24–540 (QDSRGCARWC…EEDPVLTVIT (517 aa)) the chain is Extracellular. Residues 25 to 66 (DSRGCARWCPQDSSCVNATACRCNPGFSSFSEIITTPMETCD) enclose the EGF-like 1 domain. 15 cysteine pairs are disulfide-bonded: C29-C39, C33-C45, C47-C65, C71-C85, C79-C94, C96-C117, C123-C136, C130-C145, C147-C161, C167-C180, C174-C189, C191-C210, C216-C229, C223-C238, and C240-C259. N41 carries N-linked (GlcNAc...) asparagine glycosylation. Residues 67 to 118 (DINECATLSKVSCGKFSDCWNTEGSYDCVCSPGYEPVSGAKTFKNESENTCQ) enclose the EGF-like 2; calcium-binding domain. N-linked (GlcNAc...) asparagine glycosylation occurs at N111. One can recognise an EGF-like 3; calcium-binding domain in the interval 119-162 (DVDECQQNPRLCKSYGTCVNTLGSYTCQCLPGFKLKPEDPKLCT). The 49-residue stretch at 163–211 (DVNECTSGQNPCHSSTHCLNNVGSYQCRCRPGWQPIPGSPNGPNNTVCE) folds into the EGF-like 4; calcium-binding domain. The N-linked (GlcNAc...) asparagine glycan is linked to N206. The region spanning 212 to 260 (DVDECSSGQHQCDSSTVCFNTVGSYSCRCRPGWKPRHGIPNNQKDTVCE) is the EGF-like 5; calcium-binding domain. 5 N-linked (GlcNAc...) asparagine glycosylation sites follow: N298, N347, N354, N456, and N460. A GAIN-B domain is found at 354 to 530 (NFSYPAGTEL…AVLMAHYDVQ (177 aa)). 2 cysteine pairs are disulfide-bonded: C482–C512 and C500–C514. Residues 482-530 (CVFWEHGQNGCGHWATTGCSTIGTRDTSTICRCTHLSSFAVLMAHYDVQ) form a GPS region. The chain crosses the membrane as a helical span at residues 541-561 (YMGLSVSLLCLLLAALTFLLC). Residues 562–569 (KAIQNTST) are Cytoplasmic-facing. A helical transmembrane segment spans residues 570–590 (SLHLQLSLCLFLAHLLFLVAI). Residues 591–605 (DQTGHKVLCSIIAGT) are Extracellular-facing. The helical transmembrane segment at 606–626 (LHYLYLATLTWMLLEALYLFL) threads the bilayer. Residues 627–644 (TARNLTVVNYSSINRFMK) are Cytoplasmic-facing. A helical membrane pass occupies residues 645-665 (KLMFPVGYGVPAVTVAISAAS). The Extracellular segment spans residues 666 to 683 (RPHLYGTPSRCWLQPEKG). The helical transmembrane segment at 684–704 (FIWGFLGPVCAIFSVNLVLFL) threads the bilayer. The Cytoplasmic portion of the chain corresponds to 705–735 (VTLWILKNRLSSLNSEVSTLRNTRMLAFKAT). The helical transmembrane segment at 736 to 756 (AQLFILGCTWCLGILQVGPAA) threads the bilayer. Topologically, residues 757–760 (RVMA) are extracellular. The chain crosses the membrane as a helical span at residues 761-781 (YLFTIINSLQGVFIFLVYCLL). Residues 782–823 (SQQVREQYGKWSKGIRKLKTESEMHTLSSSAKADTSKPSTVN) lie on the Cytoplasmic side of the membrane.

Belongs to the G-protein coupled receptor 2 family. Adhesion G-protein coupled receptor (ADGR) subfamily. In terms of assembly, forms a heterodimer, consisting of a large extracellular region non-covalently linked to a seven-transmembrane moiety. Interacts with chondroitin sulfate; the interaction with chondroitin sulfate is calcium-dependent. Interacts with CD55. Post-translationally, autoproteolytically cleaved into 2 subunits, an extracellular alpha subunit and a seven-transmembrane beta subunit. In terms of tissue distribution, expression is restricted to myeloid cells. Highest expression was found in peripheral blood leukocytes, followed by spleen and lymph nodes, with intermediate to low levels in thymus, bone marrow, fetal liver, placenta, and lung, and no expression in heart, brain, skeletal muscle, kidney, or pancreas. Expression is also detected in monocyte/macrophage and Jurkat cell lines but not in other cell lines tested. High expression in mast cells.

The protein localises to the cell membrane. It localises to the cell projection. It is found in the ruffle membrane. In terms of biological role, cell surface receptor that binds to the chondroitin sulfate moiety of glycosaminoglycan chains and promotes cell attachment. Promotes granulocyte chemotaxis, degranulation and adhesion. In macrophages, promotes the release of inflammatory cytokines, including IL8 and TNF. Signals probably through G-proteins. Is a regulator of mast cell degranulation. The chain is Adhesion G protein-coupled receptor E2 from Homo sapiens (Human).